Reading from the N-terminus, the 106-residue chain is Urease subunit beta (106 aa).

It belongs to the urease beta subunit family. In terms of assembly, heterotrimer of UreA (gamma), UreB (beta) and UreC (alpha) subunits. Three heterotrimers associate to form the active enzyme.

It is found in the cytoplasm. The enzyme catalyses urea + 2 H2O + H(+) = hydrogencarbonate + 2 NH4(+). Its pathway is nitrogen metabolism; urea degradation; CO(2) and NH(3) from urea (urease route): step 1/1. In Prochlorococcus marinus (strain MIT 9215), this protein is Urease subunit beta.